We begin with the raw amino-acid sequence, 37 residues long: Large ribosomal subunit protein bL36c (37 aa).

This sequence belongs to the bacterial ribosomal protein bL36 family.

It is found in the plastid. It localises to the chloroplast. In Bigelowiella natans (Pedinomonas minutissima), this protein is Large ribosomal subunit protein bL36c.